A 1108-amino-acid chain; its full sequence is Serine/threonine-protein kinase AKL1 (1108 aa).

N-acetylserine is present on Ser-2. Ser-10 is modified (phosphoserine). A Protein kinase domain is found at 35–319 (VEVVNYLAEG…IYQVLYHLCE (285 aa)). ATP contacts are provided by residues 41 to 49 (LAEGGFAQI) and Lys-70. The Proton acceptor role is filled by Asp-181. A disordered region spans residues 405-466 (IPSQNVGQEL…QSPGIEDKSI (62 aa)). Ser-407 bears the Phosphoserine mark. Over residues 419–435 (ESQSDQRKSTLSEDKSS) the composition is skewed to basic and acidic residues. Over residues 436-449 (RTTSNANSSGTANN) the composition is skewed to low complexity. Phosphothreonine is present on Thr-471. Residues 493–513 (KQSSDPTISEQSPRLNTQSLP) show a composition bias toward polar residues. Positions 493-534 (KQSSDPTISEQSPRLNTQSLPQRQKSTSSYSSGGRSMKSTSY) are disordered. Ser-504 bears the Phosphoserine mark. The segment covering 514–534 (QRQKSTSSYSSGGRSMKSTSY) has biased composition (low complexity). Phosphoserine occurs at positions 541 and 574. A compositionally biased stretch (low complexity) spans 590–629 (QQQGQRYQQAQNQTGTQGNTFPDESQYQSRVEQQQQQQDQ). 2 disordered regions span residues 590–663 (QQQG…GDSG) and 765–791 (EDMR…HSSS). The span at 781-791 (NSANEPMHSSS) shows a compositional bias: polar residues. Ser-801 carries the post-translational modification Phosphoserine. Residues 807-838 (AGKQSFQDTNEPQTGGIEDAGGSGTIKGSNNN) form a disordered region. The segment covering 810-819 (QSFQDTNEPQ) has biased composition (polar residues). Residue Ser-846 is modified to Phosphoserine. Positions 858–1108 (GAAVSSFSSS…SFFSVFRSEK (251 aa)) are disordered. The span at 859 to 872 (AAVSSFSSSSSSAS) shows a compositional bias: low complexity. The span at 910 to 934 (DDARRGKTAERRPLHNERGHKDQAR) shows a compositional bias: basic and acidic residues. Residues 935-976 (SSDASKSNQFKSKDFSSVSTRQPRQSLDLNFQEVNLSSPTLT) show a composition bias toward polar residues. 2 positions are modified to phosphoserine: Ser-953 and Ser-960. Residues 1006–1048 (ENKRHSTGHELSTRSNGKHETHRTGSKQRHDLERYRHSKDKDS) are compositionally biased toward basic and acidic residues. Residues Lys-1008 and Lys-1046 each participate in a glycyl lysine isopeptide (Lys-Gly) (interchain with G-Cter in ubiquitin) cross-link. A Phosphoserine modification is found at Ser-1048. Residues 1049–1060 (NSSITISTSTPS) are compositionally biased toward low complexity. Residues 1071 to 1082 (QSLDLERVRREA) are compositionally biased toward basic and acidic residues. At Ser-1072 the chain carries Phosphoserine.

The protein belongs to the protein kinase superfamily. Ser/Thr protein kinase family.

The catalysed reaction is L-seryl-[protein] + ATP = O-phospho-L-seryl-[protein] + ADP + H(+). It carries out the reaction L-threonyl-[protein] + ATP = O-phospho-L-threonyl-[protein] + ADP + H(+). Functionally, phosphorylates SCD5. The protein is Serine/threonine-protein kinase AKL1 (AKL1) of Saccharomyces cerevisiae (strain ATCC 204508 / S288c) (Baker's yeast).